A 480-amino-acid polypeptide reads, in one-letter code: Thyroid receptor-interacting protein 6 (480 aa).

The segment covering 1–12 (MSGPTWLPPKQP) has biased composition (pro residues). The tract at residues 1 to 43 (MSGPTWLPPKQPEPSRLPQGRSLPRGALGPPTAHGATLQPHPR) is disordered. Arginine 25 is modified (asymmetric dimethylarginine; alternate). Arginine 25 bears the Omega-N-methylarginine; alternate mark. Tyrosine 55 carries the post-translational modification Phosphotyrosine; by SRC. The disordered stretch occupies residues 57–84 (PPGVPEDRGPTWVGSHGTPQRLQGLPPD). A Phosphoserine modification is found at serine 92. Residues 107-134 (LDGGRSHAPRRPDRQAFEAPPPHAYRGG) are disordered. The segment covering 108–122 (DGGRSHAPRRPDRQA) has biased composition (basic and acidic residues). An omega-N-methylarginine mark is found at arginine 111, arginine 183, and arginine 190. Phosphoserine is present on serine 193. Residues arginine 209 and arginine 242 each carry the omega-N-methylarginine modification. Residues 218-257 (RSHREPGPGVPEGPSGVHIPAGGGRGGGHEPQGPLGQPPE) form a disordered region. Gly residues predominate over residues 238–247 (AGGGRGGGHE). LIM zinc-binding domains are found at residues 281–339 (GRCG…YVAT), 341–401 (EKCS…KFAP), and 404–471 (SVCG…RIQE). An interaction with MAGI1 and PTPN13 region spans residues 473 to 480 (SATVTTDC).

Belongs to the zyxin/ajuba family. In terms of assembly, specifically interacts with the ligand binding domain of the thyroid receptor (TR) in the presence of thyroid hormone. Interacts (via the third LIM domain and C-terminus) with PTPN13 (via the second PDZ domain). Interacts (via the second LIM domain or via the third LIM domain plus C-terminus) with PDLIM4 (via PDZ domain). Found in a complex with PTPN13 and PDLIM4. Interacts with SVIL isoform 2. Interacts with LPAR2 but not other LPA receptors. Interacts with PRKAA2. Interacts with MAGI1. Interacts with SCRIB. In case of infection, interacts with S.typhimurium protein sseI. Post-translationally, phosphorylation at Tyr-55 by SRC is required for enhancement of lysophosphatidic acid-induced cell migration. Tyr-55 is dephosphorylated by PTPN13. Highly expressed in kidney, stomach, lung, heart and testis. Low expression levels in brain, colon, thymus, pancreas and skin. Not expressed in skeletal muscle.

The protein localises to the cytoplasm. The protein resides in the cytoskeleton. It is found in the cell junction. Its subcellular location is the focal adhesion. It localises to the nucleus. Relays signals from the cell surface to the nucleus to weaken adherens junction and promote actin cytoskeleton reorganization and cell invasiveness. Involved in lysophosphatidic acid-induced cell adhesion and migration. Acts as a transcriptional coactivator for NF-kappa-B and JUN, and mediates the transrepression of these transcription factors induced by glucocorticoid receptor. The polypeptide is Thyroid receptor-interacting protein 6 (Trip6) (Mus musculus (Mouse)).